A 156-amino-acid polypeptide reads, in one-letter code: Putative pre-16S rRNA nuclease (156 aa).

This sequence belongs to the YqgF nuclease family.

The protein localises to the cytoplasm. Functionally, could be a nuclease involved in processing of the 5'-end of pre-16S rRNA. In Ehrlichia chaffeensis (strain ATCC CRL-10679 / Arkansas), this protein is Putative pre-16S rRNA nuclease.